Reading from the N-terminus, the 3071-residue chain is Intermembrane lipid transfer protein vps1301 (3071 aa).

A Chorein N-terminal domain is found at 2–115 (LEGLVAGLLN…QQALKQEQLD (114 aa)). The SHR-BD domain occupies 2143–2415 (HIEIFSPYII…KYSWDYPCCA (273 aa)).

The protein belongs to the VPS13 family.

It localises to the golgi apparatus. Its subcellular location is the trans-Golgi network. Mediates the transfer of lipids between membranes at organelle contact sites. May play a role in mitochondrial lipid homeostasis, Golgi vesicle transport, reticulophagy, actin cytoskeleton organization and formation of the forespore membrane. The polypeptide is Intermembrane lipid transfer protein vps1301 (Schizosaccharomyces pombe (strain 972 / ATCC 24843) (Fission yeast)).